We begin with the raw amino-acid sequence, 352 residues long: Pyruvate dehydrogenase E1 component subunit beta, mitochondrial (352 aa).

Residues 1-21 (MALRKCGNLFVARLAGTSTRA) constitute a mitochondrion transit peptide. Glutamate 81 lines the thiamine diphosphate pocket. Residues isoleucine 134, alanine 182, isoleucine 183, aspartate 185, and asparagine 187 each coordinate K(+).

Tetramer of 2 alpha and 2 beta subunits. It depends on thiamine diphosphate as a cofactor.

The protein localises to the mitochondrion matrix. The enzyme catalyses N(6)-[(R)-lipoyl]-L-lysyl-[protein] + pyruvate + H(+) = N(6)-[(R)-S(8)-acetyldihydrolipoyl]-L-lysyl-[protein] + CO2. In terms of biological role, the pyruvate dehydrogenase complex catalyzes the overall conversion of pyruvate to acetyl-CoA and CO(2). It contains multiple copies of three enzymatic components: pyruvate dehydrogenase (E1), dihydrolipoamide acetyltransferase (E2) and lipoamide dehydrogenase (E3). In Caenorhabditis elegans, this protein is Pyruvate dehydrogenase E1 component subunit beta, mitochondrial (pdhb-1).